The following is a 244-amino-acid chain: tRNA pseudouridine synthase A (244 aa).

The active-site Nucleophile is the Asp-52. Tyr-110 provides a ligand contact to substrate.

This sequence belongs to the tRNA pseudouridine synthase TruA family. Homodimer.

It carries out the reaction uridine(38/39/40) in tRNA = pseudouridine(38/39/40) in tRNA. In terms of biological role, formation of pseudouridine at positions 38, 39 and 40 in the anticodon stem and loop of transfer RNAs. This Clostridium botulinum (strain Alaska E43 / Type E3) protein is tRNA pseudouridine synthase A.